A 231-amino-acid chain; its full sequence is MASQSPKCLMLYSTTDGHTKTIMDTIARQLADETKVRCDVVDIKDGNSYVLADYEKVLLGASIRYGHFSAAFINYVKQHHSELSAMPSAFFSVNLTARKLDKNTATTNVYTRKFLNQSSWSPQLVGVFAGALWYPRYNFFDRVLIQFIMKVTGGETDSTKEIVYTDWAAVRRFASDFAALPLAVPPRPKANTVEKPDGILRSGSGAHCLLAIVGMSAAVIVGIRIIAAKRG.

Positions C8–A178 constitute a Flavodoxin-like domain. FMN-binding positions include T14–H18 and F90–S158. The chain crosses the membrane as a helical span at residues C208–A228.

It belongs to the HemG family. It depends on FMN as a cofactor.

It localises to the membrane. It carries out the reaction protoporphyrinogen IX + 3 a menaquinone = protoporphyrin IX + 3 a menaquinol. It catalyses the reaction protoporphyrinogen IX + 3 a ubiquinone = protoporphyrin IX + 3 a ubiquinol. The catalysed reaction is protoporphyrinogen IX + 3 a quinone = protoporphyrin IX + 3 a quinol. The protein operates within porphyrin-containing compound metabolism; protoporphyrin-IX biosynthesis; protoporphyrin-IX from protoporphyrinogen-IX: step 1/1. In terms of biological role, in E.coli extracts under anerobic conditions catalyzes the 6-electron oxidation of protoporphyrinogen IX to form protoporphyrin IX, transferring electrons to fumarate reductase, presumably via menaquinone. In vitro under aerobic conditions forms protoporphyrin IX using ubiquinone as an electron acceptor. Complements an E.coli hemG deletion, allowing normal growth in vivo. This is Protoporphyrinogen IX dehydrogenase [quinone] from Leishmania major.